A 647-amino-acid polypeptide reads, in one-letter code: Serine/threonine-protein kinase PLK3 (647 aa).

The disordered stretch occupies residues 1-56 (MEPAAGFLSPRPFPRAAAPSSPPAGPGPPASASPRSEPGVLAGPQTPDASRLITDP). The span at 20–31 (SSPPAGPGPPAS) shows a compositional bias: pro residues. The Protein kinase domain maps to 62–314 (YIKGRLLGKG…IEQILRHDFF (253 aa)). ATP contacts are provided by residues 68 to 76 (LGKGGFARC) and lysine 91. The Proton acceptor role is filled by aspartate 185. 2 consecutive POLO box domains span residues 464–542 (WVSK…YMEQ) and 563–646 (LLLQ…DRSP).

This sequence belongs to the protein kinase superfamily. Ser/Thr protein kinase family. CDC5/Polo subfamily. As to quaternary structure, interacts with GOLGB1. Interacts (via the POLO-box domain) with CIB1; leading to inhibit PLK3 kinase activity. In terms of processing, phosphorylated in an ATM-dependent manner following DNA damage. Phosphorylated as cells enter mitosis and dephosphorylated as cells exit mitosis. In terms of tissue distribution, constitutively expressed in post-mitotic neurons.

The protein localises to the cell projection. The protein resides in the dendrite. It localises to the cytoplasm. Its subcellular location is the nucleus. It is found in the nucleolus. The protein localises to the golgi apparatus. The protein resides in the cytoskeleton. It localises to the microtubule organizing center. Its subcellular location is the centrosome. The enzyme catalyses L-seryl-[protein] + ATP = O-phospho-L-seryl-[protein] + ADP + H(+). The catalysed reaction is L-threonyl-[protein] + ATP = O-phospho-L-threonyl-[protein] + ADP + H(+). In terms of biological role, serine/threonine-protein kinase involved in cell cycle regulation, response to stress and Golgi disassembly. Polo-like kinases act by binding and phosphorylating proteins that are already phosphorylated on a specific motif recognized by the POLO box domains. Phosphorylates ATF2, BCL2L1, CDC25A, CDC25C, CHEK2, HIF1A, JUN, p53/TP53, p73/TP73, PTEN, TOP2A and VRK1. Involved in cell cycle regulation: required for entry into S phase and cytokinesis. Phosphorylates BCL2L1, leading to regulate the G2 checkpoint and progression to cytokinesis during mitosis. Plays a key role in response to stress: rapidly activated upon stress stimulation, such as ionizing radiation, reactive oxygen species (ROS), hyperosmotic stress, UV irradiation and hypoxia. Involved in DNA damage response and G1/S transition checkpoint by phosphorylating CDC25A, p53/TP53 and p73/TP73. Phosphorylates p53/TP53 in response to reactive oxygen species (ROS), thereby promoting p53/TP53-mediated apoptosis. Phosphorylates CHEK2 in response to DNA damage, promoting the G2/M transition checkpoint. Phosphorylates the transcription factor p73/TP73 in response to DNA damage, leading to inhibit p73/TP73-mediated transcriptional activation and pro-apoptotic functions. Phosphorylates HIF1A and JUN is response to hypoxia. Phosphorylates ATF2 following hyperosmotic stress in corneal epithelium. Also involved in Golgi disassembly during the cell cycle: part of a MEK1/MAP2K1-dependent pathway that induces Golgi fragmentation during mitosis by mediating phosphorylation of VRK1. May participate in endomitotic cell cycle, a form of mitosis in which both karyokinesis and cytokinesis are interrupted and is a hallmark of megakaryocyte differentiation, via its interaction with CIB1. This chain is Serine/threonine-protein kinase PLK3 (Plk3), found in Rattus norvegicus (Rat).